The following is a 778-amino-acid chain: Endonuclease MutS2 (778 aa).

ATP is bound at residue 328–335; that stretch reads GPNTGGKT. The 76-residue stretch at 703–778 folds into the Smr domain; that stretch reads LDLRGKRYEE…GSGCTIANLG (76 aa).

This sequence belongs to the DNA mismatch repair MutS family. MutS2 subfamily. In terms of assembly, homodimer. Binds to stalled ribosomes, contacting rRNA.

Functionally, endonuclease that is involved in the suppression of homologous recombination and thus may have a key role in the control of bacterial genetic diversity. Its function is as follows. Acts as a ribosome collision sensor, splitting the ribosome into its 2 subunits. Detects stalled/collided 70S ribosomes which it binds and splits by an ATP-hydrolysis driven conformational change. Acts upstream of the ribosome quality control system (RQC), a ribosome-associated complex that mediates the extraction of incompletely synthesized nascent chains from stalled ribosomes and their subsequent degradation. Probably generates substrates for RQC. This Streptococcus equi subsp. zooepidemicus (strain H70) protein is Endonuclease MutS2.